A 135-amino-acid polypeptide reads, in one-letter code: Evasin P1134 (135 aa).

A signal peptide spans M1–A31. Cystine bridges form between C41–C63, C45–C65, and C56–C76. N-linked (GlcNAc...) asparagine glycosylation is present at N44. The disordered stretch occupies residues E88–P112.

It is found in the secreted. Salivary chemokine-binding protein which binds to host chemokine CXCL1. This Ixodes ricinus (Common tick) protein is Evasin P1134.